Reading from the N-terminus, the 89-residue chain is Small ribosomal subunit protein bS20 (89 aa).

A disordered region spans residues 1 to 26 (MANSAQARKRARQADGQRSHNASLRS).

The protein belongs to the bacterial ribosomal protein bS20 family.

Its function is as follows. Binds directly to 16S ribosomal RNA. The protein is Small ribosomal subunit protein bS20 of Dechloromonas aromatica (strain RCB).